A 178-amino-acid chain; its full sequence is ATP synthase subunit delta (178 aa).

The protein belongs to the ATPase delta chain family. In terms of assembly, F-type ATPases have 2 components, F(1) - the catalytic core - and F(0) - the membrane proton channel. F(1) has five subunits: alpha(3), beta(3), gamma(1), delta(1), epsilon(1). F(0) has three main subunits: a(1), b(2) and c(10-14). The alpha and beta chains form an alternating ring which encloses part of the gamma chain. F(1) is attached to F(0) by a central stalk formed by the gamma and epsilon chains, while a peripheral stalk is formed by the delta and b chains.

The protein localises to the cell membrane. Its function is as follows. F(1)F(0) ATP synthase produces ATP from ADP in the presence of a proton or sodium gradient. F-type ATPases consist of two structural domains, F(1) containing the extramembraneous catalytic core and F(0) containing the membrane proton channel, linked together by a central stalk and a peripheral stalk. During catalysis, ATP synthesis in the catalytic domain of F(1) is coupled via a rotary mechanism of the central stalk subunits to proton translocation. In terms of biological role, this protein is part of the stalk that links CF(0) to CF(1). It either transmits conformational changes from CF(0) to CF(1) or is implicated in proton conduction. The protein is ATP synthase subunit delta of Geobacillus stearothermophilus (Bacillus stearothermophilus).